The following is a 474-amino-acid chain: Aspartyl/glutamyl-tRNA(Asn/Gln) amidotransferase subunit B (474 aa).

It belongs to the GatB/GatE family. GatB subfamily. As to quaternary structure, heterotrimer of A, B and C subunits.

It carries out the reaction L-glutamyl-tRNA(Gln) + L-glutamine + ATP + H2O = L-glutaminyl-tRNA(Gln) + L-glutamate + ADP + phosphate + H(+). The enzyme catalyses L-aspartyl-tRNA(Asn) + L-glutamine + ATP + H2O = L-asparaginyl-tRNA(Asn) + L-glutamate + ADP + phosphate + 2 H(+). Allows the formation of correctly charged Asn-tRNA(Asn) or Gln-tRNA(Gln) through the transamidation of misacylated Asp-tRNA(Asn) or Glu-tRNA(Gln) in organisms which lack either or both of asparaginyl-tRNA or glutaminyl-tRNA synthetases. The reaction takes place in the presence of glutamine and ATP through an activated phospho-Asp-tRNA(Asn) or phospho-Glu-tRNA(Gln). In Coprothermobacter proteolyticus (strain ATCC 35245 / DSM 5265 / OCM 4 / BT), this protein is Aspartyl/glutamyl-tRNA(Asn/Gln) amidotransferase subunit B.